A 135-amino-acid polypeptide reads, in one-letter code: Small ribosomal subunit protein bS18 (135 aa).

Residues 1–65 are disordered; sequence MARPDMGGPK…GDEGGGRRGF (65 aa). The segment covering 9–41 has biased composition (gly residues); the sequence is PKMGGGFGGPRSGGFGGGGGGGGFGGGGFGGGR. Residues 42–61 are compositionally biased toward basic and acidic residues; sequence GGDRGDRGDRDDRGGDEGGG.

Belongs to the bacterial ribosomal protein bS18 family. Part of the 30S ribosomal subunit. Forms a tight heterodimer with protein bS6.

Functionally, binds as a heterodimer with protein bS6 to the central domain of the 16S rRNA, where it helps stabilize the platform of the 30S subunit. This Anaeromyxobacter dehalogenans (strain 2CP-C) protein is Small ribosomal subunit protein bS18.